Consider the following 22-residue polypeptide: Cysteine-rich venom protein notescatin (22 aa).

Basic and acidic residues predominate over residues 1 to 15 (SNKKDYQKEIVDKHN). A disordered region spans residues 1-22 (SNKKDYQKEIVDKHNALRRSVK).

This sequence belongs to the CRISP family. Post-translationally, contains 8 disulfide bonds. Expressed by the venom gland.

The protein localises to the secreted. The polypeptide is Cysteine-rich venom protein notescatin (Notechis scutatus scutatus (Mainland tiger snake)).